Reading from the N-terminus, the 257-residue chain is 1-(5-phosphoribosyl)-5-[(5-phosphoribosylamino)methylideneamino] imidazole-4-carboxamide isomerase (257 aa).

The Proton acceptor role is filled by Asp-8. Asp-130 acts as the Proton donor in catalysis.

The protein belongs to the HisA/HisF family.

It localises to the cytoplasm. It catalyses the reaction 1-(5-phospho-beta-D-ribosyl)-5-[(5-phospho-beta-D-ribosylamino)methylideneamino]imidazole-4-carboxamide = 5-[(5-phospho-1-deoxy-D-ribulos-1-ylimino)methylamino]-1-(5-phospho-beta-D-ribosyl)imidazole-4-carboxamide. The protein operates within amino-acid biosynthesis; L-histidine biosynthesis; L-histidine from 5-phospho-alpha-D-ribose 1-diphosphate: step 4/9. The polypeptide is 1-(5-phosphoribosyl)-5-[(5-phosphoribosylamino)methylideneamino] imidazole-4-carboxamide isomerase (Chlorobium chlorochromatii (strain CaD3)).